The primary structure comprises 425 residues: Inhibin beta A chain (425 aa).

A signal peptide spans 1 to 20; it reads MPLLWLRGFLLASCWIIVRS. Residues 21-309 constitute a propeptide that is removed on maturation; the sequence is SPTPGSEGHS…EDHPHRRRRR (289 aa). N-linked (GlcNAc...) asparagine glycosylation occurs at asparagine 165. The segment at 259 to 289 is disordered; it reads KKKKKEEEGEGKKRDGEGGAGGDEEKEQSHR. Positions 263 to 275 are enriched in basic and acidic residues; that stretch reads KEEEGEGKKRDGE. 4 cysteine pairs are disulfide-bonded: cysteine 313–cysteine 321, cysteine 320–cysteine 390, cysteine 349–cysteine 422, and cysteine 353–cysteine 424.

Belongs to the TGF-beta family. In terms of assembly, dimeric, linked by one or more disulfide bonds. Inhibin A is a dimer of alpha/INHA and beta-A/INHBA. Activin A is a homodimer of beta-A/INHBA. Activin AB is a dimer of beta-A/INHBA and beta-B/INHBB. Interacts with FST and FSTL3; these interactions prevent activin A interaction to its type II receptor. Activin A interacts with ACVR2A. Activin A interacts with BMPR2. Inhibin A interacts with ACVR1; this interaction creates a non-signaling complex (NSC) that inhibits ACVR1-mediated BMP signaling. Inhibin A interacts with ACVR2A.

The protein localises to the secreted. In terms of biological role, inhibins/activins are involved in regulating a number of diverse functions such as hypothalamic and pituitary hormone secretion, gonadal hormone secretion, germ cell development and maturation, erythroid differentiation, insulin secretion, nerve cell survival, embryonic axial development or bone growth, depending on their subunit composition. Activin A is a homodimer of INHBA that plays a role in several essential biological processes including embryonic development, stem cell maintenance and differentiation, haematopoiesis, cell proliferation and tissue fibrosis. Signals through type I (such as ACVR1B or ACVR1C) and type II receptors (such as ACVR2A, ACVR2B or BMPR2) which, upon ligand binding, phosphorylate SMAD2 and SMAD3 intracellular signaling mediators that form a complex with SMAD4, translocate to the nucleus and modulate gene expression. Can also activate alternative non-canonical intracellular signaling pathways including the p38 MAPK, extracellular signal-regulated kinases 1/2 (ERK1/2) and c-Jun N-terminal kinases (JNKs) to modulate cell migration and differentiation. Alternatively, promotes osteoblastic differentiation via ACVRL1-SMAD1/5/9 pathway. In addition, can engage the type I receptor ACVR1 to form an ACVR1-activin A-type II receptor non-signaling complex (NSC) that renders receptors unavailable for engagement with BMPs, hence resulting in an apparent inhibition of ACVR1-mediated BMP signaling. Functionally, inhibin A is a dimer of alpha/INHA and beta-A/INHBA that functions as a feedback regulator in the hypothalamic-pituitary-gonadal (HPG) axis. Inhibits the secretion of FSH from the anterior pituitary gland by acting on pituitary gonadotrope cells. Antagonizes activin A by binding to the proteoglycan, betaglycan, and forming a stable complex with and, thereby, sequestering type II activin receptors while excluding type I receptor. The protein is Inhibin beta A chain (INHBA) of Bos taurus (Bovine).